A 183-amino-acid polypeptide reads, in one-letter code: Putative NAD(P)H nitroreductase YdjA (183 aa).

Residues 10 to 12, arginine 35, and histidine 39 each bind FMN; that span reads RRS. 121–126 is an NAD(+) binding site; it reads AAVAQG. 131 to 133 is an FMN binding site; the sequence is WRS.

Belongs to the nitroreductase family. As to quaternary structure, homodimer. The cofactor is FMN.

This is Putative NAD(P)H nitroreductase YdjA (ydjA) from Escherichia coli O157:H7.